The primary structure comprises 276 residues: NH(3)-dependent NAD(+) synthetase (276 aa).

43 to 50 (GISGGVDS) provides a ligand contact to ATP. Residue aspartate 49 participates in Mg(2+) binding. Arginine 146 is a binding site for deamido-NAD(+). Threonine 166 contacts ATP. Glutamate 171 contributes to the Mg(2+) binding site. Deamido-NAD(+)-binding residues include lysine 179 and aspartate 186. Residues lysine 195 and threonine 217 each contribute to the ATP site. Residue 266-267 (HK) coordinates deamido-NAD(+).

Belongs to the NAD synthetase family. Homodimer.

The enzyme catalyses deamido-NAD(+) + NH4(+) + ATP = AMP + diphosphate + NAD(+) + H(+). Its pathway is cofactor biosynthesis; NAD(+) biosynthesis; NAD(+) from deamido-NAD(+) (ammonia route): step 1/1. Its function is as follows. Catalyzes the ATP-dependent amidation of deamido-NAD to form NAD. Uses ammonia as a nitrogen source. The sequence is that of NH(3)-dependent NAD(+) synthetase from Psychromonas ingrahamii (strain DSM 17664 / CCUG 51855 / 37).